Reading from the N-terminus, the 689-residue chain is Histone-lysine N-methyltransferase MEDEA (689 aa).

Disordered regions lie at residues 1-20, 51-73, and 169-188; these read MEKE…LNQI, HQSF…KSLL, and ELSS…EIKK. An interaction with FIE region spans residues 1–109; that stretch reads MEKENHEDDG…DEDQDYALEE (109 aa). The segment covering 171–184 has biased composition (acidic residues); the sequence is SSEEDEEDEEEDEE. The region spanning 339–389 is the SANT domain; the sequence is NNTMWTPVEKDLYLKGIEIFGRNSCDVALNILRGLKTCLEIYNYMREQDQC. Residues 428-532 enclose the CXC domain; sequence RYPPALKKTT…TLGETPVQIQ (105 aa). Residues 544 to 659 form the SET domain; it reads KKILIGKSDV…EGEELFFDYC (116 aa). The disordered stretch occupies residues 666–689; that stretch reads DWSRGREPRKTGASKRSKEARPAR.

This sequence belongs to the class V-like SAM-binding methyltransferase superfamily. Histone-lysine methyltransferase family. EZ subfamily. In terms of assembly, interacts directly with FIE via its N-terminal domain. These two proteins are probably indirectly associated with FIS2. In plants, PcG complexes are probably composed of a member of the EZ family (CLF or MEA), FIE, and a member of the VEFS family (FIS2, VRN2 or EMF2). Interacts with TAF13. As to expression, expressed in unpollinated siliques that contain maturing gametophytes. Not expressed at early stages of floral development during early megagametogenesis.

The protein localises to the nucleus. It carries out the reaction L-lysyl(27)-[histone H3] + 3 S-adenosyl-L-methionine = N(6),N(6),N(6)-trimethyl-L-lysyl(27)-[histone H3] + 3 S-adenosyl-L-homocysteine + 3 H(+). In terms of biological role, polycomb group (PcG) protein. Catalytic subunit of some PcG multiprotein complex, which methylates 'Lys-27' of histone H3, leading to transcriptional repression of the affected target genes. Required to prevent the proliferation of the central cell of the female gametophyte by repressing target genes before fertilization. After fertilization, it probably also regulates the embryo and endosperm proliferation and anteroposterior organization during seed development. PcG proteins act by forming multiprotein complexes, which are required to maintain the transcriptionally repressive state of homeotic genes throughout development. PcG proteins are not required to initiate repression, but to maintain it during later stages of development. Interacts with the promoter and repress the transcription of genes such as PHE1 and PHE2, that are paternally active and maternally silenced genes. This Arabidopsis thaliana (Mouse-ear cress) protein is Histone-lysine N-methyltransferase MEDEA (MEA).